A 57-amino-acid chain; its full sequence is DNA gyrase inhibitor YacG (57 aa).

Zn(2+) is bound by residues Cys5, Cys8, Cys20, and Cys24.

This sequence belongs to the DNA gyrase inhibitor YacG family. In terms of assembly, interacts with GyrB. Requires Zn(2+) as cofactor.

In terms of biological role, inhibits all the catalytic activities of DNA gyrase by preventing its interaction with DNA. Acts by binding directly to the C-terminal domain of GyrB, which probably disrupts DNA binding by the gyrase. This chain is DNA gyrase inhibitor YacG, found in Caulobacter vibrioides (strain ATCC 19089 / CIP 103742 / CB 15) (Caulobacter crescentus).